Reading from the N-terminus, the 288-residue chain is MKKTIGFIGLGVMGKSMASHILNDGHPVLVYTRTKEKAESILQKGAIWKDTVKDLSKEADVIITMVGYPSDVEEVYFGSNGIIENAKEGAYLIDMTTSKPSLAKKIAEAAKEKALFALDAPVSGGDIGAQNGTLAIMVGGEKEAFEACMPIFSLMGENIQYQGPAGSGQHTKMCNQIAIAAGMIGVAEAMAYAQKSGLEPENVLKSITTGAAGSWSLSNLAPRMLQGNFEPGFYVKHFIKDMGIALEEAELMGEEMPGLSLAKSLYDKLAAQGEENSGTQSIYKLWVK.

Residues 6-20 (GFIG…MASH) and threonine 97 each bind NAD(+). Lysine 172 is an active-site residue. Residue lysine 240 participates in NAD(+) binding.

It belongs to the HIBADH-related family.

Its subcellular location is the cell membrane. It is found in the membrane raft. This is an uncharacterized protein from Bacillus subtilis (strain 168).